The chain runs to 780 residues: Pumilio domain-containing protein C4G8.03c (780 aa).

Disordered regions lie at residues 1-29 (MVNR…LSSY), 298-330 (LSHF…LHSK), and 358-411 (NHHS…GKTV). Positions 298-307 (LSHFPDHLDP) are enriched in basic and acidic residues. Low complexity predominate over residues 311-322 (PSPYQPSSLQPL). The span at 358–382 (NHHSSLSMDNDPTNVSTKNRNNQTV) shows a compositional bias: polar residues. In terms of domain architecture, PUM-HD spans 435–778 (EKSDDLSNLL…HILAKLTSST (344 aa)). Pumilio repeat units lie at residues 462–497 (GFLG…LFFP), 498–533 (EIRQ…SMLN), 534–569 (GIGE…SLLL), 570–606 (KIII…PLFL), 607–642 (SMEE…RLVN), 643–678 (SIIK…RIIE), 679–714 (KFFG…QMLQ), 715–752 (EFLS…LILR), and 753–780 (SISH…STSS).

This Schizosaccharomyces pombe (strain 972 / ATCC 24843) (Fission yeast) protein is Pumilio domain-containing protein C4G8.03c.